A 138-amino-acid polypeptide reads, in one-letter code: Large ribosomal subunit protein uL16 (138 aa).

The span at 1–13 (MLQPARRKYRKEQ) shows a compositional bias: basic residues. The tract at residues 1–22 (MLQPARRKYRKEQKGRNTGVAT) is disordered.

It belongs to the universal ribosomal protein uL16 family. As to quaternary structure, part of the 50S ribosomal subunit.

In terms of biological role, binds 23S rRNA and is also seen to make contacts with the A and possibly P site tRNAs. The protein is Large ribosomal subunit protein uL16 of Polaromonas naphthalenivorans (strain CJ2).